A 500-amino-acid chain; its full sequence is Putative beta-glucosidase 5 (500 aa).

A signal peptide spans methionine 1–cysteine 20. A beta-D-glucoside contacts are provided by residues glutamine 43, histidine 140, and asparagine 185–glutamate 186. Catalysis depends on glutamate 186, which acts as the Proton donor. Cysteine 205 and cysteine 212 are oxidised to a cystine. N-linked (GlcNAc...) asparagine glycosylation is present at asparagine 216. Residue tyrosine 328 coordinates a beta-D-glucoside. Residue asparagine 361 is glycosylated (N-linked (GlcNAc...) asparagine). Residue glutamate 394 participates in a beta-D-glucoside binding. Glutamate 394 (nucleophile) is an active-site residue. Asparagine 424 carries an N-linked (GlcNAc...) asparagine glycan. Positions 434 and 450 each coordinate a beta-D-glucoside. Residues asparagine 456 and asparagine 495 are each glycosylated (N-linked (GlcNAc...) asparagine).

It belongs to the glycosyl hydrolase 1 family.

It catalyses the reaction Hydrolysis of terminal, non-reducing beta-D-glucosyl residues with release of beta-D-glucose.. This chain is Putative beta-glucosidase 5, found in Arabidopsis thaliana (Mouse-ear cress).